Consider the following 174-residue polypeptide: Translation initiation factor IF-3 (174 aa).

Belongs to the IF-3 family. In terms of assembly, monomer.

The protein localises to the cytoplasm. In terms of biological role, IF-3 binds to the 30S ribosomal subunit and shifts the equilibrium between 70S ribosomes and their 50S and 30S subunits in favor of the free subunits, thus enhancing the availability of 30S subunits on which protein synthesis initiation begins. In Xanthobacter autotrophicus (strain ATCC BAA-1158 / Py2), this protein is Translation initiation factor IF-3.